The following is a 336-amino-acid chain: UbiA prenyltransferase domain-containing protein 1 (336 aa).

The segment at 1–22 is disordered; the sequence is MQEMKPAALSGSNGLNGASGSS. Over residues 7 to 22 the composition is skewed to low complexity; the sequence is AALSGSNGLNGASGSS. 7 helical membrane passes run 79–99, 129–149, 158–178, 180–200, 201–221, 254–274, and 315–335; these read LLLLLVCAVAVLLVHGAGNLV, VVMFGAVLYSAGCLCATLLYF, LALIYFGGLSSSFLYTGGIGL, YVALGDVVILITFGPLAVMFA, HAVQVGYLSVLPLVYAVPLAL, LSYVIYNLLLFVPYLLFCILA, and LLMGLFYVFGIILAPQGSLPL.

Belongs to the UbiA prenyltransferase family.

The protein localises to the endoplasmic reticulum membrane. The protein resides in the golgi apparatus membrane. It localises to the mitochondrion membrane. The catalysed reaction is menadiol + (2E,6E,10E)-geranylgeranyl diphosphate = menaquinol-4 + diphosphate. It catalyses the reaction all-trans-decaprenyl diphosphate + 4-hydroxybenzoate = 4-hydroxy-3-(all-trans-decaprenyl)benzoate + diphosphate. Its pathway is quinol/quinone metabolism; menaquinone biosynthesis. It functions in the pathway cofactor biosynthesis; ubiquinone biosynthesis. In terms of biological role, prenyltransferase that mediates the formation of menaquinone-4 (MK-4) and coenzyme Q10. MK-4 is a vitamin K2 isoform required for endothelial cell development. Mediates the conversion of phylloquinone (PK) into MK-4, probably by cleaving the side chain of phylloquinone (PK) to release 2-methyl-1,4-naphthoquinone (menadione; K3) and then prenylating it with geranylgeranyl pyrophosphate (GGPP) to form MK-4. Also plays a role in cardiovascular development independently of MK-4 biosynthesis, by acting as a coenzyme Q10 biosynthetic enzyme: coenzyme Q10, also named ubiquinone, plays an important antioxidant role in the cardiovascular system. Mediates biosynthesis of coenzyme Q10 in the Golgi membrane, leading to protect cardiovascular tissues from nos3/eNOS-dependent oxidative stress. In Danio rerio (Zebrafish), this protein is UbiA prenyltransferase domain-containing protein 1 (ubiad1).